The sequence spans 172 residues: Protein-export protein SecB (172 aa).

The protein belongs to the SecB family. In terms of assembly, homotetramer, a dimer of dimers. One homotetramer interacts with 1 SecA dimer.

The protein localises to the cytoplasm. In terms of biological role, one of the proteins required for the normal export of preproteins out of the cell cytoplasm. It is a molecular chaperone that binds to a subset of precursor proteins, maintaining them in a translocation-competent state. It also specifically binds to its receptor SecA. In Xylella fastidiosa (strain 9a5c), this protein is Protein-export protein SecB.